Consider the following 2043-residue polypeptide: MASFFQSFRSSSMAKQLLRFALSRLDLLDTQALDLENLDFALGRNTVLEFRDVGLILQKLERLLGLPPAFSLQKAKVLILRVTIPMDFYASPITAEIDGVDIRLKVASKKEKDRQDAGKRGKGMAGSEAVPTAADLAQSFLETQPVAEKEELEQALAAETQDLAASMAASEPESDDDSPVGTGQPLSLPVFLTNFLHGIVDRIQIRVQSVTFQADVEVAVDSNSPVPEPVTFQLSLDNINVEGVTSTSETPDEASTIVHKEGKRHVLLDNIRAALITETNVLSSLARSASMPSSSASRSPVAPRSPVDNETTAFNPSGLSRSVGSSAMAGSRDSSDDLPQSQHLQDNEAAFNIPYDFGDSNEPNEADEASPLSTPRASLYRGSPPPTITDHAKSAVLEPSPLIWSTAEREAQSVPFLRPPEGFPLSNDPSPAASVHSSSTNRSSGSSARDDLAESHIYSHEDAESMYMSAFSQTGSQGLRTGMPGAWDAFDDAEESETEAGPSTSTQAAPYDGSFDPPQPDRIPSPEQPSQDQKRNSPSFYAQDSSAEVPEPPQDDIPTPRGPTRLVKQLLSLSSISIYLPSSHKHVKIDTPDDGKSISPNIPGAFSMHSAAATSPKPTPADEPAGETTPIDPSIEIVLKPVEIQFDASIGFLLAMVVAQLLEAAQGGSKDAAGPTAAKPPSASPDVKVTVEQLSVLFLEKLAGVADVPQRFFEKSTPDLSSDVLLQAQVVDLRGSVSHDGPQTEMDFSIEKLKFGYANDDIVSFDRSVLMFESVANTFPSAGQDISVKATMGPEISRLEVNTLPLYVQLDLQKLDEVFGWFGGLSSFLNMGTSITANTSRADKSPANPVQKPKGVRFDEPVHPDDQAVTRENKTDLRINGLQVDVLGKDCSVMLNTSAFKLVSREGGIGIHLSRIRLSGPYFKNSRAEPPIVSEVLDTRVEFLPSPRAKDLERLLELITPSSNKFDEDEDEIMVDTLLRQRRKGSVLSLAIGKVRFDAGNLPQLTCLPSLIDDLAKLGTVAKYLPEDDRPGLLTLCHVKNAECRVDFGGRFGAILTSLTDLEVAHISMPQLAAVALGEIAVTRNKIEELVVTSPPPQTGPWQNLPVFRLRLIDDMEPVLKIKLMGLGLEYRVPTIMDLLNLGQDVTPEDYEAGLAASVASLGEQAHTVIKRASSGSLTSTGQAKAPRSLKVDVAFRDCLIGLNPLALPSKLTVALTDAHLEMVPGPQELVAVTTMKRVSVLLIDDISILESPGVRFTTSRRPPVVISTQVAELCTMGYVNICQISSAKATVTVSRDSQGDTQLEVEVRDDLLVLETCADSTQTLITLANALTPPTPPSTEIKYRTTVFPVEDLLASIRAETFGRAEGEYDLDNDFDVPQELGDDADSDLDFDAGPSDSPLNLDSQYLEENIVQEELFDATSSSMLREGATKFEDTNDGVLLSTAGLDNPSSSGLEISSSDLSITDDYFDKGPVGRGTAHRWDSKTDRYDQHNEIKLQRSPLKLCVRDVHVIWHLFDGYDWERTREVIAKAVKEVEAKAYERRAKTDRRGGFDPEFGEDEPIIGDCLFNSIYIGIPSNRDPKELAQAINHGLHDFGDTESIATSTVTTSTLRAAGQRRRSKSLRLDRSRRHKITFELKGVSADVVMFPPGSGETVNSLDIRLRDVDVFDHVPESTWKKFATYDLDAGERELGADMVHAEIITTKPADTPATEMVISATILPLRLHVDQDALDFITRFFTFRDETAPIHASPSDVPFIQRIVVNSIPIQLDFKPKRVDYAGLRSGKTTEFMNFMILEGARLVLRRVILYGVSGFDRLGDQLNDIWTVDVKRNQLPGVLAGLAPVRSLVNAGSGFRDLIEIPIREYRKDGRIVRSLRKGATAFAKTTGTEVVKLGAKLAIGTQNVLQGAEGLLVPQTGESSSNAAAVAAVLGDDWDEAEYEEEINRKFSLYADQPLGIVQGVRGAYASLARDLSVARDAIIAVPAEIMESEGAQGAAAAVLKKAPTIILRPAIGATKAIGQTLLGATNSLDPMHRKRVDAKYKKH.

Disordered regions lie at residues 111 to 130 (EKDRQDAGKRGKGMAGSEAV), 288 to 341 (SASM…LPQS), 353 to 392 (IPYDFGDSNEPNEADEASPLSTPRASLYRGSPPPTITDHA), 413 to 458 (SVPF…SHIY), 469 to 488 (SAFSQTGSQGLRTGMPGAWD), 493 to 563 (AEES…PRGP), 839 to 863 (TSRADKSPANPVQKPKGVRFDEPVH), and 1370 to 1400 (YDLDNDFDVPQELGDDADSDLDFDAGPSDSP). The segment covering 288-306 (SASMPSSSASRSPVAPRSP) has biased composition (low complexity). Over residues 308–325 (DNETTAFNPSGLSRSVGS) the composition is skewed to polar residues. Positions 434–447 (SVHSSSTNRSSGSS) are enriched in low complexity. Residues 448 to 458 (ARDDLAESHIY) are compositionally biased toward basic and acidic residues. Residues 470–479 (AFSQTGSQGL) are compositionally biased toward polar residues. Pro residues predominate over residues 517–527 (PPQPDRIPSPE). Polar residues predominate over residues 528-546 (QPSQDQKRNSPSFYAQDSS). The segment covering 1370–1392 (YDLDNDFDVPQELGDDADSDLDF) has biased composition (acidic residues).

Belongs to the ATG2 family.

The protein localises to the preautophagosomal structure membrane. It localises to the endoplasmic reticulum membrane. It carries out the reaction a 1,2-diacyl-sn-glycero-3-phosphocholine(in) = a 1,2-diacyl-sn-glycero-3-phosphocholine(out). The catalysed reaction is a 1,2-diacyl-sn-glycero-3-phospho-L-serine(in) = a 1,2-diacyl-sn-glycero-3-phospho-L-serine(out). The enzyme catalyses a 1,2-diacyl-sn-glycero-3-phosphoethanolamine(in) = a 1,2-diacyl-sn-glycero-3-phosphoethanolamine(out). Functionally, lipid transfer protein required for autophagosome completion and peroxisome degradation. Tethers the edge of the isolation membrane (IM) to the endoplasmic reticulum (ER) and mediates direct lipid transfer from ER to IM for IM expansion. ATG2 binds to the ER exit site (ERES), which is the membrane source for autophagosome formation, using basic residues in its N-terminal region (NR) and to the expanding edge of the IM through its C-terminal region. The latter binding is assisted by an ATG18-PtdIns3P interaction. ATG2 then extracts phospholipids from the membrane source using its NR and transfers them to ATG9 to the IM through its predicted beta-sheet-rich structure for membrane expansion. The sequence is that of Autophagy-related protein 2 (ATG2) from Chaetomium globosum (strain ATCC 6205 / CBS 148.51 / DSM 1962 / NBRC 6347 / NRRL 1970) (Soil fungus).